The sequence spans 364 residues: Nucleoside ABC transporter permease protein NupB (364 aa).

8 consecutive transmembrane segments (helical) span residues 9-29 (LVPL…MLAF), 77-99 (FNIG…ALSF), 105-125 (LLMI…MGFI), 138-158 (VITT…MIHS), 195-215 (TLNI…IIFT), 244-264 (LILS…VYGF), 284-304 (MAVA…ALLF), and 326-346 (VVTA…VMLP).

This sequence belongs to the binding-protein-dependent transport system permease family. In terms of assembly, the complex is composed of two ATP-binding proteins (NupA), two transmembrane proteins (NupB and NupC) and a solute-binding protein (BmpA).

Its subcellular location is the cell membrane. Functionally, part of an ABC transporter complex involved in the uptake of all common nucleosides. Responsible for the translocation of the substrate across the membrane. The protein is Nucleoside ABC transporter permease protein NupB of Lactococcus lactis subsp. cremoris (strain MG1363).